A 156-amino-acid polypeptide reads, in one-letter code: Small ribosomal subunit protein uS7 (156 aa).

The protein belongs to the universal ribosomal protein uS7 family. Part of the 30S ribosomal subunit. Contacts proteins S9 and S11.

One of the primary rRNA binding proteins, it binds directly to 16S rRNA where it nucleates assembly of the head domain of the 30S subunit. Is located at the subunit interface close to the decoding center, probably blocks exit of the E-site tRNA. This chain is Small ribosomal subunit protein uS7, found in Laribacter hongkongensis (strain HLHK9).